We begin with the raw amino-acid sequence, 341 residues long: Beta-ketoacyl-[acyl-carrier-protein] synthase III 1 (341 aa).

Catalysis depends on residues Cys-113 and His-249. Residues 250 to 254 (QANIR) form an ACP-binding region. Asn-279 is a catalytic residue.

Belongs to the thiolase-like superfamily. FabH family. As to quaternary structure, homodimer.

It localises to the cytoplasm. It carries out the reaction malonyl-[ACP] + acetyl-CoA + H(+) = 3-oxobutanoyl-[ACP] + CO2 + CoA. It participates in lipid metabolism; fatty acid biosynthesis. Catalyzes the condensation reaction of fatty acid synthesis by the addition to an acyl acceptor of two carbons from malonyl-ACP. Catalyzes the first condensation reaction which initiates fatty acid synthesis and may therefore play a role in governing the total rate of fatty acid production. Possesses both acetoacetyl-ACP synthase and acetyl transacylase activities. Its substrate specificity determines the biosynthesis of branched-chain and/or straight-chain of fatty acids. The protein is Beta-ketoacyl-[acyl-carrier-protein] synthase III 1 of Deinococcus radiodurans (strain ATCC 13939 / DSM 20539 / JCM 16871 / CCUG 27074 / LMG 4051 / NBRC 15346 / NCIMB 9279 / VKM B-1422 / R1).